The sequence spans 658 residues: ATP-dependent zinc metalloprotease FtsH 4 (658 aa).

Positions 1 to 22 are disordered; it reads MREPTNRQGSPGPGEPRPPAQG. At 1-28 the chain is on the cytoplasmic side; sequence MREPTNRQGSPGPGEPRPPAQGRPRFPT. Residues 29–49 form a helical membrane-spanning segment; the sequence is WILWVALLALALWNVYTFFWP. Over 50 to 149 the chain is Extracellular; the sequence is SSGARLNIPY…TVKIDQAGGS (100 aa). The disordered stretch occupies residues 95–114; that stretch reads QVLSPGDPVPPGTSPNEIRT. Residues 150-170 form a helical membrane-spanning segment; it reads VWPSLLATIVPLFLFIGLMVY. Residues 171–658 lie on the Cytoplasmic side of the membrane; the sequence is LGRSMSRGQQ…AAPAAAADSV (488 aa). 243-250 contacts ATP; sequence GPPGTGKT. H464 lines the Zn(2+) pocket. Residue E465 is part of the active site. Zn(2+) contacts are provided by H468 and D540.

In the central section; belongs to the AAA ATPase family. The protein in the C-terminal section; belongs to the peptidase M41 family. Homohexamer. Requires Zn(2+) as cofactor.

The protein resides in the cell membrane. Its function is as follows. Acts as a processive, ATP-dependent zinc metallopeptidase for both cytoplasmic and membrane proteins. Plays a role in the quality control of integral membrane proteins. This is ATP-dependent zinc metalloprotease FtsH 4 (ftsh4) from Sphaerobacter thermophilus (strain ATCC 49802 / DSM 20745 / KCCM 41009 / NCIMB 13125 / S 6022).